Consider the following 180-residue polypeptide: MSTSIHATTIFAVQHNGHAAMAGDGQVTLGEQVIMKQTARKVRRLYNDKVLAGFAGSVADAFTLFEKFETKLQQFSGNLERAAVELAQEWRGDKQLRQLEAMLIVMDETSILVVSGTGEVIVPDDNLIAIGSGGNYALSAGRALKRNATHLSASEMAYESLKVASDICVFTNDRIIVENL.

Threonine 8 is an active-site residue. The Na(+) site is built by serine 165, cysteine 168, and threonine 171.

The protein belongs to the peptidase T1B family. HslV subfamily. In terms of assembly, a double ring-shaped homohexamer of HslV is capped on each side by a ring-shaped HslU homohexamer. The assembly of the HslU/HslV complex is dependent on binding of ATP.

Its subcellular location is the cytoplasm. The enzyme catalyses ATP-dependent cleavage of peptide bonds with broad specificity.. With respect to regulation, allosterically activated by HslU binding. Functionally, protease subunit of a proteasome-like degradation complex believed to be a general protein degrading machinery. The polypeptide is ATP-dependent protease subunit HslV (Staphylococcus saprophyticus subsp. saprophyticus (strain ATCC 15305 / DSM 20229 / NCIMB 8711 / NCTC 7292 / S-41)).